A 199-amino-acid chain; its full sequence is Large ribosomal subunit protein bL25 (199 aa).

The protein belongs to the bacterial ribosomal protein bL25 family. CTC subfamily. In terms of assembly, part of the 50S ribosomal subunit; part of the 5S rRNA/L5/L18/L25 subcomplex. Contacts the 5S rRNA. Binds to the 5S rRNA independently of L5 and L18.

In terms of biological role, this is one of the proteins that binds to the 5S RNA in the ribosome where it forms part of the central protuberance. The polypeptide is Large ribosomal subunit protein bL25 (Nostoc punctiforme (strain ATCC 29133 / PCC 73102)).